A 409-amino-acid chain; its full sequence is uncharacterized protein (409 aa).

Positions 1 to 26 (MKKELLASLVLCLSLSPLVSTNEVFA) are cleaved as a signal peptide.

This is an uncharacterized protein from Bacillus subtilis (strain 168).